A 348-amino-acid polypeptide reads, in one-letter code: MNTTASSPWPPFLQQLLDRQSLTRQQAVQLMEGWLDDDIPPALSGAILAAIQAKGLDPEELTGMAQVLQEQSQGNQGREMVAPLVDTCGTGGDGSSTFNISTAVAFVVAAAGVKVAKHGNRSASSKVGSADVLEALGLNLQAGADQVAAAVSAVGITFLFAPGWHPALKSVAPIRKTLKVRTVFNLLGPLVNPLRPTGQVIGVYSPDFLSVMAIALKNLGTARAMVLHGREQLDEAGLGAPTDIASFNQGEVTPQVLDPQNFGLAPAPLTALKGGDLAENVTILSQVLQGKGTQAQIDAVALNASLALQVGDAVPWGDHGQGIHLAKDILSQGAGWDKLQQLVAFLGS.

5-phospho-alpha-D-ribose 1-diphosphate contacts are provided by residues G89, 92-93 (GD), T97, 99-102 (NIST), 117-125 (KHGNRSASS), and S129. G89 is a binding site for anthranilate. Residue S101 coordinates Mg(2+). Residue N120 participates in anthranilate binding. An anthranilate-binding site is contributed by R175. Positions 234 and 235 each coordinate Mg(2+).

It belongs to the anthranilate phosphoribosyltransferase family. In terms of assembly, homodimer. Requires Mg(2+) as cofactor.

It carries out the reaction N-(5-phospho-beta-D-ribosyl)anthranilate + diphosphate = 5-phospho-alpha-D-ribose 1-diphosphate + anthranilate. Its pathway is amino-acid biosynthesis; L-tryptophan biosynthesis; L-tryptophan from chorismate: step 2/5. Functionally, catalyzes the transfer of the phosphoribosyl group of 5-phosphorylribose-1-pyrophosphate (PRPP) to anthranilate to yield N-(5'-phosphoribosyl)-anthranilate (PRA). The polypeptide is Anthranilate phosphoribosyltransferase (Synechocystis sp. (strain ATCC 27184 / PCC 6803 / Kazusa)).